The primary structure comprises 507 residues: Pre-glycoprotein polyprotein GP complex (507 aa).

Residue G2 is the site of N-myristoyl glycine; by host attachment. Topologically, residues 2-17 are extracellular; it reads GQVVTFLQSLPEVINE. Residues 18–33 traverse the membrane as a helical segment; it reads AINIALIAISIICILK. The Cytoplasmic segment spans residues 34–58; it reads GLVNFWKCGVVQLAIFLCLAGRKCD. C57 contacts Zn(2+). Residues 59 to 445 are Extracellular-facing; that stretch reads GLMIDRRHEL…QGKTPIALTD (387 aa). Disulfide bonds link C86–C247, C292–C305, C314–C323, and C377–C398. N-linked (GlcNAc...) asparagine; by host glycans are attached at residues N89, N111, N179, and N240. N-linked (GlcNAc...) asparagine; by host glycans are attached at residues N378, N386, N403, and N408. The helical transmembrane segment at 446-466 threads the bilayer; the sequence is ICFWSLVFFTSTVFLQLVGIP. The Cytoplasmic portion of the chain corresponds to 467-507; sequence THRHLVGEGCPKPHRITSNSLCACGYYKIPKRPTRWVRKGK. Positions 468, 470, 476, 480, 488, and 490 each coordinate Zn(2+).

Belongs to the arenaviridae GPC protein family. In terms of assembly, interacts with glycoprotein G2. Part of the GP complex (GP-C) together with glycoprotein G1 and glycoprotein G2. The GP-complex interacts with protein Z, which interacts with ribonucleocapsid; these interactions may induce virion budding. As to quaternary structure, homotrimer; disulfide-linked. In pre-fusion state, G1 homotrimers bind G2 homotrimers via ionic interactions. Part of the GP complex (GP-C) together with glycoprotein G2 and the stable signal peptide. The GP-complex interacts with protein Z, which interacts with ribonucleocapsid; these interactions may induce virion budding. Homotrimer. Interacts with the stable signal peptide. In pre-fusion state, G2 homotrimers bind G1 homotrimers via ionic interactions. Part of the GP complex (GP-C) together with glycoprotein G1 and the stable signal peptide. Acidification in the endosome triggers rearrangements, which ultimately leads to a 6 helix bundle formed by the two heptad repeat domains (HR1 and HR2) in post-fusion state. The GP-complex interacts with protein Z, which interacts with ribonucleocapsid; these interactions may induce virion budding. In terms of processing, specific enzymatic cleavages in vivo yield mature proteins. GP-C polyprotein is cleaved in the endoplasmic reticulum by the host protease MBTPS1. Only cleaved glycoprotein is incorporated into virions. The SSP remains stably associated with the GP complex following cleavage by signal peptidase and plays crucial roles in the trafficking of GP through the secretory pathway. Post-translationally, myristoylation is necessary for GP2-mediated fusion activity.

It localises to the virion membrane. It is found in the host endoplasmic reticulum membrane. The protein resides in the host Golgi apparatus membrane. The protein localises to the host cell membrane. In terms of biological role, functions as a cleaved signal peptide that is retained as the third component of the GP complex (GP-C). Helps to stabilize the spike complex in its native conformation. The SSP is required for efficient glycoprotein expression, post-translational maturation cleavage of G1 and G2, glycoprotein transport to the cell surface plasma membrane, formation of infectious virus particles, and acid pH-dependent glycoprotein-mediated cell fusion. Forms the virion spikes together with glycoprotein G2. The glycoprotein spike trimers are connected to the underlying matrix. Interacts with the host receptor leading to virus endocytosis. Functionally, forms the virion spikes together with glycoprotein G1. The glycoprotein spike trimers are connected to the underlying matrix. Class I viral fusion protein that directs fusion of viral and host endosomal membranes, leading to delivery of the nucleocapsid into the cytoplasm. Membrane fusion is mediated by irreversible conformational changes induced by acidification. The chain is Pre-glycoprotein polyprotein GP complex from Allpahuayo mammarenavirus (isolate Rat/Peru/CLHP-2472/1997) (ALLV).